A 116-amino-acid chain; its full sequence is RutC family protein HI_1627 (116 aa).

Belongs to the RutC family.

This is RutC family protein HI_1627 from Haemophilus influenzae (strain ATCC 51907 / DSM 11121 / KW20 / Rd).